Here is a 148-residue protein sequence, read N- to C-terminus: MTDKEQVVIYTDGACKGNPGRGGWGALLLYKGAERELWGGEPDTTNNRMELMAAIQALAALKRSCPIRLITDSEYVMRGITEWLPNWKKRGWKTASKQPVKNADLWQALDEQVARHQVEWQWVRGHTGDPGNERADQLANRGVAELPR.

Residues 3–144 (DKEQVVIYTD…ADQLANRGVA (142 aa)) form the RNase H type-1 domain. Mg(2+) contacts are provided by Asp12, Glu50, Asp72, and Asp136. The tract at residues 125–148 (GHTGDPGNERADQLANRGVAELPR) is disordered.

It belongs to the RNase H family. As to quaternary structure, monomer. Mg(2+) serves as cofactor.

Its subcellular location is the cytoplasm. The enzyme catalyses Endonucleolytic cleavage to 5'-phosphomonoester.. Its function is as follows. Endonuclease that specifically degrades the RNA of RNA-DNA hybrids. The chain is Ribonuclease H from Pseudomonas aeruginosa (strain LESB58).